A 1069-amino-acid chain; its full sequence is Carbamoyl phosphate synthase large chain (1069 aa).

A carboxyphosphate synthetic domain region spans residues 1 to 401; the sequence is MPLNKDIKRV…AFLKGIRSLE (401 aa). ATP is bound by residues R129, R169, G175, G176, K208, V210, E215, G241, I242, H243, Q284, and E298. The ATP-grasp 1 domain maps to 133 to 327; it reads RDMMNRIGEP…IAKLAAKIAL (195 aa). Q284, E298, and N300 together coordinate Mg(2+). Positions 284, 298, and 300 each coordinate Mn(2+). An oligomerization domain region spans residues 402–549; the sequence is IGKYSLDHKK…YSTYEQYDEV (148 aa). The interval 550–932 is carbamoyl phosphate synthetic domain; it reads EVSNRRKVIV…ALYKGFVGAN (383 aa). The region spanning 674–864 is the ATP-grasp 2 domain; sequence DELLERLDIS…IVDIATQVML (191 aa). ATP-binding residues include R710, K749, L751, E755, G780, V781, H782, S783, Q823, and E835. Mg(2+)-binding residues include Q823, E835, and N837. 3 residues coordinate Mn(2+): Q823, E835, and N837. Residues 932-1069 form the MGS-like domain; it reads NMYPSKEKGK…KDLEVFDITK (138 aa). The segment at 933–1069 is allosteric domain; that stretch reads MYPSKEKGKI…KDLEVFDITK (137 aa).

Belongs to the CarB family. In terms of assembly, composed of two chains; the small (or glutamine) chain promotes the hydrolysis of glutamine to ammonia, which is used by the large (or ammonia) chain to synthesize carbamoyl phosphate. Tetramer of heterodimers (alpha,beta)4. Mg(2+) is required as a cofactor. It depends on Mn(2+) as a cofactor.

It catalyses the reaction hydrogencarbonate + L-glutamine + 2 ATP + H2O = carbamoyl phosphate + L-glutamate + 2 ADP + phosphate + 2 H(+). It carries out the reaction hydrogencarbonate + NH4(+) + 2 ATP = carbamoyl phosphate + 2 ADP + phosphate + 2 H(+). The protein operates within amino-acid biosynthesis; L-arginine biosynthesis; carbamoyl phosphate from bicarbonate: step 1/1. Its pathway is pyrimidine metabolism; UMP biosynthesis via de novo pathway; (S)-dihydroorotate from bicarbonate: step 1/3. Large subunit of the glutamine-dependent carbamoyl phosphate synthetase (CPSase). CPSase catalyzes the formation of carbamoyl phosphate from the ammonia moiety of glutamine, carbonate, and phosphate donated by ATP, constituting the first step of 2 biosynthetic pathways, one leading to arginine and/or urea and the other to pyrimidine nucleotides. The large subunit (synthetase) binds the substrates ammonia (free or transferred from glutamine from the small subunit), hydrogencarbonate and ATP and carries out an ATP-coupled ligase reaction, activating hydrogencarbonate by forming carboxy phosphate which reacts with ammonia to form carbamoyl phosphate. This chain is Carbamoyl phosphate synthase large chain, found in Clostridium botulinum (strain Alaska E43 / Type E3).